Here is a 610-residue protein sequence, read N- to C-terminus: Zinc metalloproteinase-disintegrin-like BITM06A (610 aa).

An N-terminal signal peptide occupies residues 1–20 (MIQVLLVTICLAAFPYQGSS). Positions 21 to 189 (IILESGNVND…KKASQLVVTA (169 aa)) are excised as a propeptide. Positions 198-394 (RYVELFIVVD…ENPQCILNEP (197 aa)) constitute a Peptidase M12B domain. Residues E201 and D285 each coordinate Ca(2+). Disulfide bonds link C309–C389, C349–C373, and C351–C356. H334 contacts Zn(2+). E335 is an active-site residue. H338 and H344 together coordinate Zn(2+). A glycan (N-linked (GlcNAc...) asparagine) is linked at N372. Ca(2+) is bound by residues C389, N392, V404, N407, L409, E411, E414, and D417. Positions 402-488 (PPVCGNELLE…ECPADVFHKN (87 aa)) constitute a Disintegrin domain. Intrachain disulfides connect C405/C434, C416/C429, C418/C424, C428/C451, C442/C448, C447/C473, C460/C480, C467/C499, C492/C504, C511/C561, C526/C572, C539/C549, C556/C598, and C592/C603. The short motif at 466–468 (ECD) is the D/ECD-tripeptide element. D468, P469, E471, D483, and V484 together coordinate Ca(2+).

The protein belongs to the venom metalloproteinase (M12B) family. P-III subfamily. P-IIIa sub-subfamily. As to quaternary structure, monomer. Zn(2+) serves as cofactor. As to expression, expressed by the venom gland.

The protein resides in the secreted. Functionally, snake venom metalloproteinase that impairs hemostasis in the envenomed animal. In Bothrops insularis (Golden lancehead), this protein is Zinc metalloproteinase-disintegrin-like BITM06A.